The following is a 332-amino-acid chain: 2,3-diketo-L-gulonate reductase (332 aa).

Catalysis depends on histidine 44, which acts as the Proton donor. Residues 168 to 174, 224 to 225, and 304 to 306 contribute to the NAD(+) site; these read ITMVDMS, WK, and GHE.

This sequence belongs to the LDH2/MDH2 oxidoreductase family. DlgD subfamily. As to quaternary structure, homodimer.

The protein resides in the cytoplasm. It carries out the reaction 3-dehydro-L-gulonate + NAD(+) = 2,3-dioxo-L-gulonate + NADH + H(+). It catalyses the reaction 3-dehydro-L-gulonate + NADP(+) = 2,3-dioxo-L-gulonate + NADPH + H(+). Its function is as follows. Catalyzes the reduction of 2,3-diketo-L-gulonate in the presence of NADH, to form 3-keto-L-gulonate. In Klebsiella pneumoniae (strain 342), this protein is 2,3-diketo-L-gulonate reductase.